The primary structure comprises 760 residues: Armadillo-like helical domain-containing protein 4 (760 aa).

The first 27 residues, 1-27, serve as a signal peptide directing secretion; the sequence is MSRPIVLHICLAFCSLLLLNFAAQCLA. The Extracellular segment spans residues 28 to 700; the sequence is FPNLERREIV…KDKAGYMSGM (673 aa). Disordered stretches follow at residues 49–69, 117–143, 216–243, 373–392, 474–495, and 536–652; these read LNTD…SGDP, GEEV…LTNP, RTEK…TEPS, HGGE…PMGD, TRGE…DAPR, and NEEL…SQEP. N-linked (GlcNAc...) asparagine glycosylation is present at Asn56. Residues 216–228 are compositionally biased toward basic and acidic residues; that stretch reads RTEKFEANPEHKT. Residues 380–390 show a composition bias toward polar residues; that stretch reads DQSSVTPTSPM. Positions 474–484 are enriched in basic and acidic residues; sequence TRGEDETKGGR. The span at 594 to 635 shows a compositional bias: acidic residues; that stretch reads LESEEGEDDEDEEDEEEEDEEEEDEEEDEEDKDADSLDEALG. The chain crosses the membrane as a helical span at residues 701–721; it reads LVPVGVGIAGALFILGALYSI. Residues 722-760 are Cytoplasmic-facing; sequence KVMNRRRRNGFKRHKRKQREFNSMQDRVMLLADSSEDEF. Residues Ser755 and Ser756 each carry the phosphoserine modification.

In terms of assembly, interacts with IL6ST; this interaction prevents IL6ST protein homodimerization and bridges ARMH4 with IL6R and STAT3 and therefore inhibits phosphorylation of STAT3 at 'Tyr-705'. Interacts (via cytoplasmic tail) with RICTOR; this interaction bridges ARMH4 to the mTORC2 complex and inhibits the mTORC2 kinase activity.

It localises to the membrane. Functionally, may modulate immune response and may play a role in inflammation. Down-modulates STAT3 signaling throught direct interaction with IL6ST, resulting in the inhibition of phosphorylation of STAT3 at Tyr-705. May negatively regulates AKT signaling by modulating the activity of mTORC2 complex through RICTOR interaction. The protein is Armadillo-like helical domain-containing protein 4 of Bos taurus (Bovine).